The following is a 492-amino-acid chain: NADPH:adrenodoxin oxidoreductase, mitochondrial (492 aa).

The transit peptide at 1 to 32 (MAPRCWRWWPWSSWTRTRLPPSRSIQNFGQHF) directs the protein to the mitochondrion. The FAD site is built by A49, E70, L78, and V114. NADP(+) contacts are provided by residues 185 to 188 (QGNV), 229 to 230 (RR), and E241. 2 positions are modified to phosphoserine: S311 and S318. Residues W399 and 406-408 (GVI) contribute to the FAD site. Residue G406 coordinates NADP(+).

It belongs to the ferredoxin--NADP reductase type 1 family. As to quaternary structure, monomer. Interacts directly with FDX1. Requires FAD as cofactor. As to expression, detected in adrenal cortex and corpus luteum (at protein level).

It is found in the mitochondrion inner membrane. It carries out the reaction 2 reduced [adrenodoxin] + NADP(+) + H(+) = 2 oxidized [adrenodoxin] + NADPH. The enzyme catalyses 2 reduced [2Fe-2S]-[ferredoxin] + NADP(+) + H(+) = 2 oxidized [2Fe-2S]-[ferredoxin] + NADPH. The protein operates within steroid metabolism; cholesterol metabolism. Serves as the first electron transfer protein in all the mitochondrial P450 systems including cholesterol side chain cleavage in all steroidogenic tissues, steroid 11-beta hydroxylation in the adrenal cortex, 25-OH-vitamin D3-24 hydroxylation in the kidney, and sterol C-27 hydroxylation in the liver. Also acts as a ferredoxin--NADP(+) reductase essential for coenzyme Q biosynthesis: together with FDX2, transfers the electrons required for the hydroxylation reaction performed by COQ6. The protein is NADPH:adrenodoxin oxidoreductase, mitochondrial (FDXR) of Bos taurus (Bovine).